A 260-amino-acid polypeptide reads, in one-letter code: 3'-5' ssDNA/RNA exonuclease TatD (260 aa).

Positions 92, 128, and 153 each coordinate a divalent metal cation.

It belongs to the metallo-dependent hydrolases superfamily. TatD-type hydrolase family. TatD subfamily. In terms of assembly, monomer. Mg(2+) serves as cofactor.

It localises to the cytoplasm. Functionally, 3'-5' exonuclease that prefers single-stranded DNA and RNA. May play a role in the H(2)O(2)-induced DNA damage repair. This is 3'-5' ssDNA/RNA exonuclease TatD from Edwardsiella piscicida.